Reading from the N-terminus, the 275-residue chain is Cell division protein FtsQ (275 aa).

The disordered stretch occupies residues 1–20 (MRDLHKKKPRPVTQNRLKKP). Over 1 to 38 (MRDLHKKKPRPVTQNRLKKPPKTCKPINYRGILKKTAK) the chain is Cytoplasmic. Residues 39–61 (VVGGAALISAVGCAGYGIYRIIA) traverse the membrane as a helical segment. Over 62–275 (GTTFFKLERI…YSDKIIVKKV (214 aa)) the chain is Periplasmic. A POTRA domain is found at 66–134 (FKLERIEVSE…NTLSMQIAER (69 aa)).

The protein belongs to the FtsQ/DivIB family. FtsQ subfamily.

Its subcellular location is the cell inner membrane. Functionally, essential cell division protein. The protein is Cell division protein FtsQ of Geotalea daltonii (strain DSM 22248 / JCM 15807 / FRC-32) (Geobacter daltonii).